A 338-amino-acid polypeptide reads, in one-letter code: MTRF1L release factor glutamine methyltransferase (338 aa).

Residues 167-171 (GCGSG), D190, W225, and N239 each bind S-adenosyl-L-methionine. 239-242 (NPPY) contributes to the substrate binding site.

Belongs to the protein N5-glutamine methyltransferase family.

Its subcellular location is the mitochondrion. It catalyses the reaction L-glutaminyl-[peptide chain release factor] + S-adenosyl-L-methionine = N(5)-methyl-L-glutaminyl-[peptide chain release factor] + S-adenosyl-L-homocysteine + H(+). In terms of biological role, N5-glutamine methyltransferase responsible for the methylation of the glutamine residue in the universally conserved GGQ motif of the mitochondrial translation release factors MTRF1, MTRF1L, MRPL58/ICT1 and MTRFR. This is MTRF1L release factor glutamine methyltransferase (HEMK1) from Homo sapiens (Human).